We begin with the raw amino-acid sequence, 2367 residues long: Toxin B (2367 aa).

The four-helical bundle stretch occupies residues 2–91 (SLVNRKQLEK…EILELKNSNL (90 aa)). The region spanning 96–469 (KNLHFIWIGG…YPEANTTITL (374 aa)) is the GT44 domain. The tract at residues 96–469 (KNLHFIWIGG…YPEANTTITL (374 aa)) is glucosyltransferase region. UDP-alpha-D-glucose is bound by residues 101–103 (IWI), N139, 269–273 (SDILR), and 286–288 (DVD). Residues D286, D288, and E516 each coordinate Mg(2+). A UDP-alpha-D-glucose-binding site is contributed by 519 to 521 (SLW). Residues 545–800 (GEDDNLDFSQ…KSKNLPELST (256 aa)) form an autoprocessing region region. Zn(2+) is bound by residues E546 and D547. In terms of domain architecture, Peptidase C80 spans 568-775 (SSSTKSSERG…EESIIKDISS (208 aa)). Y578, K601, and K648 together coordinate 1D-myo-inositol hexakisphosphate. Position 654 (H654) interacts with Zn(2+). H654 acts as the For protease activity in catalysis. The active-site Nucleophile; for protease activity is the C699. H758 lines the Zn(2+) pocket. 1D-myo-inositol hexakisphosphate contacts are provided by K765, K776, and K793. Residues 801 to 1501 (LLQEIRNNSN…VVLIIKVYMD (701 aa)) form a translocation region region. Interaction with host frizzled receptors FZD1, FZD2 and FZD7 stretches follow at residues 1434-1439 (LKTLMA), 1487-1512 (SELS…YYSN), and 1598-1600 (SLK). 19 Cell wall-binding repeats span residues 1833-1852 (VSGL…PIKN), 1854-1873 (ITGF…DNGG), 1876-1895 (SVGE…NGVL), 1926-1945 (FTGK…NYRA), 1946-1965 (AIEW…DTGR), 1967-1986 (FKGL…DGIM), 1987-2006 (QKGF…SGVM), 2007-2026 (KSGY…NGEM), 2057-2076 (YSGI…SFTA), 2077-2097 (VVGW…NTAE), 2099-2118 (SIGI…SGIM), 2119-2138 (QIGF…SGIV), 2139-2158 (ESGM…NGLV), 2209-2231 (ETGW…EAKK), 2233-2252 (YKGI…NGIM), 2253-2272 (RTGL…DGEM), 2273-2292 (QYGY…DGIM), 2323-2342 (YTGW…EYIA), and 2343-2362 (ATGS…DTAQ). The interval 1835–2367 (GLVYINDSLY…PDTAQLVISE (533 aa)) is receptor-binding (CROPS) region.

The protein belongs to the clostridial glucosylating toxin (LCGT) family. Interacts with host FZD1. Interacts with host FZD2; interaction promotes toxin entry into host cell and occupies the binding site for Wnt-adducted palmitoleate in FZD2, leading to prevent Wnt-binding and downstream Wnt signaling. Interacts with host FZD7. Interacts with host CSPG4. Interacts with host NECTIN3/PVRL3. Requires Zn(2+) as cofactor. The cofactor is Mn(2+). It depends on Mg(2+) as a cofactor. In terms of processing, undergoes autocatalytic cleavage to release the N-terminal part (Glucosyltransferase TcdB), which constitutes the active part of the toxin, in the host cytosol. 1D-myo-inositol hexakisphosphate-binding (InsP6) activates the peptidase C80 domain and promotes autoprocessing.

Its subcellular location is the secreted. The protein localises to the host endosome membrane. The protein resides in the host cytoplasm. It localises to the host cytosol. It is found in the host cell membrane. The enzyme catalyses L-threonyl-[protein] + UDP-alpha-D-glucose = 3-O-(alpha-D-glucosyl)-L-threonyl-[protein] + UDP + H(+). With respect to regulation, protease activity is activated upon binding to 1D-myo-inositol hexakisphosphate (InsP6), which induces conformational reorganization. Its function is as follows. Precursor of a cytotoxin that targets and disrupts the colonic epithelium, inducing the host inflammatory and innate immune responses and resulting in diarrhea and pseudomembranous colitis. TcdB constitutes the main toxin that mediates the pathology of C.difficile infection, an opportunistic pathogen that colonizes the colon when the normal gut microbiome is disrupted. Compared to TcdA, TcdB is more virulent and more important for inducing the host inflammatory and innate immune responses. This form constitutes the precursor of the toxin: it enters into host cells and mediates autoprocessing to release the active toxin (Glucosyltransferase TcdB) into the host cytosol. Targets colonic epithelia by binding to the frizzled receptors FZD1, FZD2 and FZD7, and enters host cells via clathrin-mediated endocytosis. Frizzled receptors constitute the major host receptors in the colonic epithelium, but other receptors, such as CSPG4 or NECTIN3/PVRL3, have been identified. Binding to carbohydrates and sulfated glycosaminoglycans on host cell surface also contribute to entry into cells. Once entered into host cells, acidification in the endosome promotes the membrane insertion of the translocation region and formation of a pore, leading to translocation of the GT44 and peptidase C80 domains across the endosomal membrane. This activates the peptidase C80 domain and autocatalytic processing, releasing the N-terminal part (Glucosyltransferase TcdB), which constitutes the active part of the toxin, in the cytosol. Functionally, active form of the toxin, which is released into the host cytosol following autoprocessing and inactivates small GTPases. Acts by mediating monoglucosylation of small GTPases of the Rho family (Rac1, RhoA, RhoB, RhoC, RhoG and Cdc42) in host cells at the conserved threonine residue located in the switch I region ('Thr-37/35'), using UDP-alpha-D-glucose as the sugar donor. Monoglucosylation of host small GTPases completely prevents the recognition of the downstream effector, blocking the GTPases in their inactive form, leading to actin cytoskeleton disruption and cell death, resulting in the loss of colonic epithelial barrier function. This chain is Toxin B, found in Clostridioides difficile (Peptoclostridium difficile).